We begin with the raw amino-acid sequence, 470 residues long: Shutoff alkaline exonuclease (470 aa).

Belongs to the herpesviridae alkaline nuclease family. In terms of assembly, forms a complex with the DNA polymerase, the DNA polymerase processivity factor, and the major DNA binding protein.

It is found in the host nucleus. It localises to the host cytoplasm. Its function is as follows. Plays a role in processing non linear or branched viral DNA intermediates in order to promote the production of mature packaged unit-length linear progeny viral DNA molecules. Exhibits endonuclease and exonuclease activities and accepts both double-stranded and single-stranded DNA as substrate. Exonuclease digestion of DNA is in the 5'-&gt; 3' direction and the products are 5'-monophosphate nucleosides. Additionally, forms a recombinase with the major DNA-binding protein, which displays strand exchange activity. Also acts as a cytoplasmic RNA endonuclease that induces degradation of the majority of the cellular messenger RNAs during early lytic infection. The resulting inhibition of cellular protein synthesis serves to ensure maximal viral gene expression and evasion from host immune response. Internally cleaves host mRNAs which are then degraded by the cellular exonuclease XRN1. Bypasses therefore the regulatory steps of deadenylation and decapping normally required for XRN1 activation. This Epstein-Barr virus (strain GD1) (HHV-4) protein is Shutoff alkaline exonuclease.